We begin with the raw amino-acid sequence, 556 residues long: Oxygen-dependent choline dehydrogenase (556 aa).

Asp-4–Glu-33 contacts FAD. Catalysis depends on His-473, which acts as the Proton acceptor.

The protein belongs to the GMC oxidoreductase family. The cofactor is FAD.

The enzyme catalyses choline + A = betaine aldehyde + AH2. The catalysed reaction is betaine aldehyde + NAD(+) + H2O = glycine betaine + NADH + 2 H(+). Its pathway is amine and polyamine biosynthesis; betaine biosynthesis via choline pathway; betaine aldehyde from choline (cytochrome c reductase route): step 1/1. Its function is as follows. Involved in the biosynthesis of the osmoprotectant glycine betaine. Catalyzes the oxidation of choline to betaine aldehyde and betaine aldehyde to glycine betaine at the same rate. In Escherichia coli O139:H28 (strain E24377A / ETEC), this protein is Oxygen-dependent choline dehydrogenase.